Reading from the N-terminus, the 58-residue chain is Histatherin (58 aa).

The N-terminal stretch at 1-19 (MKIFIFIFIMALILAMIRA) is a signal peptide.

This sequence belongs to the histatin/statherin family. Expressed in mammary glands.

Its subcellular location is the secreted. The sequence is that of Histatherin from Bos taurus (Bovine).